The chain runs to 499 residues: Probable cytosol aminopeptidase (499 aa).

Mn(2+)-binding residues include Lys-263 and Asp-268. Lys-275 is an active-site residue. Mn(2+)-binding residues include Asp-286, Asp-345, and Glu-347. The active site involves Arg-349.

This sequence belongs to the peptidase M17 family. It depends on Mn(2+) as a cofactor.

Its subcellular location is the cytoplasm. The enzyme catalyses Release of an N-terminal amino acid, Xaa-|-Yaa-, in which Xaa is preferably Leu, but may be other amino acids including Pro although not Arg or Lys, and Yaa may be Pro. Amino acid amides and methyl esters are also readily hydrolyzed, but rates on arylamides are exceedingly low.. It catalyses the reaction Release of an N-terminal amino acid, preferentially leucine, but not glutamic or aspartic acids.. Its function is as follows. Presumably involved in the processing and regular turnover of intracellular proteins. Catalyzes the removal of unsubstituted N-terminal amino acids from various peptides. In Chlamydia trachomatis serovar A (strain ATCC VR-571B / DSM 19440 / HAR-13), this protein is Probable cytosol aminopeptidase.